Here is a 166-residue protein sequence, read N- to C-terminus: MTRKAIYPGTFDPFTNGHLDVLERALNIFDHVEVVLAENSQKQTLFSVDERLEMVHEVVREFSNVSVDVLHAGLLADYARQAGASAIVRGVRQVKDFEYEFQMSLLNRHLYPEVTTVFLMPNVKYTYVASTIIREVSMLGGDVSKFVHPFVLDKLNAKRAEREGQS.

Residue Thr-10 coordinates substrate. Residues Thr-10–Phe-11 and His-18 contribute to the ATP site. Substrate-binding residues include Lys-42, Leu-75, and Arg-89. ATP-binding positions include Gly-90–Arg-92, Glu-100, and Tyr-125–Thr-131.

Belongs to the bacterial CoaD family. As to quaternary structure, homohexamer. Mg(2+) serves as cofactor.

Its subcellular location is the cytoplasm. It catalyses the reaction (R)-4'-phosphopantetheine + ATP + H(+) = 3'-dephospho-CoA + diphosphate. It functions in the pathway cofactor biosynthesis; coenzyme A biosynthesis; CoA from (R)-pantothenate: step 4/5. Its function is as follows. Reversibly transfers an adenylyl group from ATP to 4'-phosphopantetheine, yielding dephospho-CoA (dPCoA) and pyrophosphate. This Chlorobaculum parvum (strain DSM 263 / NCIMB 8327) (Chlorobium vibrioforme subsp. thiosulfatophilum) protein is Phosphopantetheine adenylyltransferase.